The chain runs to 380 residues: Glucose-1-phosphate adenylyltransferase (380 aa).

Alpha-D-glucose 1-phosphate contacts are provided by residues Gly-164, 179-180, and Ser-190; that span reads EK.

The protein belongs to the bacterial/plant glucose-1-phosphate adenylyltransferase family. Homotetramer.

The catalysed reaction is alpha-D-glucose 1-phosphate + ATP + H(+) = ADP-alpha-D-glucose + diphosphate. It functions in the pathway glycan biosynthesis; glycogen biosynthesis. Functionally, involved in the biosynthesis of ADP-glucose, a building block required for the elongation reactions to produce glycogen. Catalyzes the reaction between ATP and alpha-D-glucose 1-phosphate (G1P) to produce pyrophosphate and ADP-Glc. This is Glucose-1-phosphate adenylyltransferase from Streptococcus gordonii (strain Challis / ATCC 35105 / BCRC 15272 / CH1 / DL1 / V288).